The chain runs to 164 residues: Putative anionic 4-hydroxy-benzoate permease (164 aa).

Positions 1-30 (CGRRRGSLAWPDASSPSANPRPGAGAAESS) are disordered. A run of 3 helical transmembrane segments spans residues 62–82 (LWVA…LMFM), 97–117 (GMAQ…VGGL), and 126–146 (PALT…MLAG).

The protein belongs to the major facilitator superfamily. Cyanate porter (TC 2.A.1.17) family.

It is found in the cell membrane. May be involved in uptake of anionic 4-hydroxy-benzoate. This Thauera aromatica protein is Putative anionic 4-hydroxy-benzoate permease.